Consider the following 161-residue polypeptide: Nucleotide-binding protein Glov_3198 (161 aa).

The protein belongs to the YajQ family.

Functionally, nucleotide-binding protein. The sequence is that of Nucleotide-binding protein Glov_3198 from Trichlorobacter lovleyi (strain ATCC BAA-1151 / DSM 17278 / SZ) (Geobacter lovleyi).